The chain runs to 304 residues: Porphobilinogen deaminase (304 aa).

An S-(dipyrrolylmethanemethyl)cysteine modification is found at Cys240.

The protein belongs to the HMBS family. As to quaternary structure, monomer. It depends on dipyrromethane as a cofactor.

The enzyme catalyses 4 porphobilinogen + H2O = hydroxymethylbilane + 4 NH4(+). The protein operates within porphyrin-containing compound metabolism; protoporphyrin-IX biosynthesis; coproporphyrinogen-III from 5-aminolevulinate: step 2/4. In terms of biological role, tetrapolymerization of the monopyrrole PBG into the hydroxymethylbilane pre-uroporphyrinogen in several discrete steps. This chain is Porphobilinogen deaminase, found in Xanthomonas campestris pv. campestris (strain ATCC 33913 / DSM 3586 / NCPPB 528 / LMG 568 / P 25).